Consider the following 1029-residue polypeptide: MATKTKDFQEKKLFQVVRELNVSEDRVVEFLEEEGYEEALSGSGLNAKIVDEEAYLVLREEYADDAEVAARIRELRSEEDDGGPERDEVATLDEEQAAEPESATETAEEAAEPAVADDEEEPRASGDAAPEAAPAEEDTSDATAPADAEAEPSGDEASAEASADDAPADEAPTDEAETAPVDAADKDAAAIADEQKQAAQEPDAEADASGQDTGEETSDTDAATEADATDDAEAESAAPEPTEAEPETPADETEAEDVSADKETASAEEADDHASDEHAPDEDAEAPEEPTEAEGEADDTTEEETPAEGADDAADDEADEEGETLKAGRYRLKGPSVVGKMDSDQLQRPDRKRKRKDKDKDKDKSSKKDKKDKSNKKSKSKGKKQKGGGGGGPDEEDIEQTLQETLQELEQGASRERQRRRRRRRKRHEEERQRRRERKREQENILEVTEFVTTGELANLIGEPVSDVIDTLFDAGMMVSINQRLDTETIEFVADEYGYEVEFVAERDTQAVEVEEDDPEDLEPRAPVVTVMGHVDHGKTSLLDYVRNANVVAGEEGGITQHVGAHYVELTDHDNEAIAFLDTPGHEAFTAMRARGAKATDIVILVVAADDSVMPRTKEAINHAQAADVPIVVAINKMDKREADAEKVRAELADQNVLVEEYGGDVQSAEVSAKTGDGINELLDKVLLQSEIMELKANPNREASGVIIESRLEKGRGNVITVLVQNGTLETGDPFLAGIHSGSVRAMFNERDNRIESVGPSQPALVLGCDGSPEVGDQFVVMDSEGEARDVAQERQRIHREQELRRQSQVSLDQVSRQMAEGEFHELNLIIKADVGGSVEALSDALLKLKTDEVAVNVIHSGVGAITESDVMLARASDAIILGFQVRPTSGAREASQREEVDIRTYSVIYAAIEDVRDALEGLLSPERREETKGRAEVRDTFSVPDVGMVAGCYVNEGTVGRNQKVRLVRDGVVQYEGEISSLKRFEEDVSEVQSGYECGLSIENFDDLKVGDELETYVIVEEARELEV.

The disordered stretch occupies residues 73 to 441 (RELRSEEDDG…RQRRRERKRE (369 aa)). Acidic residues-rich tracts occupy residues 106 to 121 (TAEE…DEEE) and 148 to 177 (AEAE…DEAE). Residues 183–196 (AADKDAAAIADEQK) show a composition bias toward basic and acidic residues. 3 stretches are compositionally biased toward acidic residues: residues 213–234 (TGEE…DAEA), 242–258 (TEAE…AEDV), and 279–322 (APDE…DEEG). Over residues 358-372 (KDKDKDKSSKKDKKD) the composition is skewed to basic and acidic residues. Basic residues predominate over residues 373 to 386 (KSNKKSKSKGKKQK). The segment covering 400–411 (QTLQETLQELEQ) has biased composition (low complexity). The segment covering 417–427 (RQRRRRRRRKR) has biased composition (basic residues). Over residues 428-441 (HEEERQRRRERKRE) the composition is skewed to basic and acidic residues. Residues 524–696 (PRAPVVTVMG…LLQSEIMELK (173 aa)) enclose the tr-type G domain. Residues 533–540 (GHVDHGKT) are G1. Position 533–540 (533–540 (GHVDHGKT)) interacts with GTP. Positions 558–562 (GITQH) are G2. The interval 582 to 585 (DTPG) is G3. GTP-binding positions include 582-586 (DTPGH) and 636-639 (NKMD). The interval 636 to 639 (NKMD) is G4. Residues 672–674 (SAK) form a G5 region.

This sequence belongs to the TRAFAC class translation factor GTPase superfamily. Classic translation factor GTPase family. IF-2 subfamily.

It localises to the cytoplasm. In terms of biological role, one of the essential components for the initiation of protein synthesis. Protects formylmethionyl-tRNA from spontaneous hydrolysis and promotes its binding to the 30S ribosomal subunits. Also involved in the hydrolysis of GTP during the formation of the 70S ribosomal complex. The sequence is that of Translation initiation factor IF-2 from Salinibacter ruber (strain DSM 13855 / M31).